Here is a 250-residue protein sequence, read N- to C-terminus: 2,5-dichloro-2,5-cyclohexadiene-1,4-diol dehydrogenase (250 aa).

Residue 9–34 (IIVTGGGSGIGRATVELLVASGANVA) coordinates NAD(+). Ser-141 provides a ligand contact to substrate. The active-site Proton acceptor is the Tyr-154.

Belongs to the short-chain dehydrogenases/reductases (SDR) family.

It carries out the reaction 2,5-dichlorocyclohexa-2,5-dien-1,4-diol + NAD(+) = 2,5-dichlorohydroquinone + NADH + H(+). The protein operates within xenobiotic degradation; gamma-hexachlorocyclohexane degradation. Functionally, catalyzes the dehydrogenation of 2,5-dichloro-2,5-cyclohexadiene-1,4-diol (2,5-DDOL) to 2,5-dichlorohydroquinone (2,5-DCHQ), a step in the degradation of gamma-hexachlorocyclohexane (gamma-HCH or lindane). In Sphingobium indicum (strain DSM 16412 / CCM 7286 / MTCC 6364 / B90A), this protein is 2,5-dichloro-2,5-cyclohexadiene-1,4-diol dehydrogenase.